The following is a 168-amino-acid chain: MGFFLFSQMPSFFLVSTLLLFLIISHSSHAQNSQQDYLDAHNTARADVGVEPLTWDNGVAAYAQNYVSQLAADCNLVHSHGQYGENLAQGSGDFMTAAKAVEMWVDEKQYYDHDSNTCAQGQVCGHYTQVVWRNSVRVGCARVKCNNGGYVVSCNYDPPGNVIGQSPY.

An N-terminal signal peptide occupies residues 1–30 (MGFFLFSQMPSFFLVSTLLLFLIISHSSHA). Residues 38-156 (LDAHNTARAD…NGGYVVSCNY (119 aa)) enclose the SCP domain.

Belongs to the CRISP family. Three disulfide bonds are present.

Its subcellular location is the vacuole. In terms of biological role, probably involved in the defense reaction of plants against pathogens. This Nicotiana tabacum (Common tobacco) protein is Pathogenesis-related protein 1B.